Here is a 103-residue protein sequence, read N- to C-terminus: Large ribosomal subunit protein bL21 (103 aa).

This sequence belongs to the bacterial ribosomal protein bL21 family. In terms of assembly, part of the 50S ribosomal subunit. Contacts protein L20.

Functionally, this protein binds to 23S rRNA in the presence of protein L20. This Glaesserella parasuis serovar 5 (strain SH0165) (Haemophilus parasuis) protein is Large ribosomal subunit protein bL21.